A 33-amino-acid chain; its full sequence is Rugosin-B (33 aa).

An intrachain disulfide couples cysteine 27 to cysteine 33.

This sequence belongs to the frog skin active peptide (FSAP) family. Brevinin subfamily. In terms of tissue distribution, expressed by the skin glands.

Its subcellular location is the secreted. In terms of biological role, shows antibacterial activity against both Gram-negative and Gram-positive bacteria. The sequence is that of Rugosin-B from Glandirana rugosa (Japanese wrinkled frog).